The primary structure comprises 516 residues: Effector protein hopAB1 (516 aa).

2 disordered regions span residues 1-93 (MSGI…AQPA) and 175-259 (RALA…DEAL). Residues 16-30 (WRADDEPVTERERDS) are compositionally biased toward basic and acidic residues. Positions 31-41 (SSGANLTNSPQ) are enriched in polar residues. Residues 81-90 (PVEPRQPPEA) show a composition bias toward pro residues. Composition is skewed to low complexity over residues 183–196 (PAPS…SRSS) and 212–224 (QTSS…SSTS).

It belongs to the HopAB family.

Its subcellular location is the secreted. Its function is as follows. Effector protein that plays different roles depending on the species and plant cultivars that interact with the pathogen. Acts as a virulence determinant by enhancing the development of disease symptoms and bacterial growth. Acts as an avirulence factor by eliciting hypersensitive response (HR) and plant resistance. The polypeptide is Effector protein hopAB1 (hopAB1) (Pseudomonas syringae pv. syringae (strain B728a)).